The primary structure comprises 393 residues: G protein-activated inward rectifier potassium channel 3 (393 aa).

The segment at 1–23 (MAQENAAFSPGSEEPPRRRGRQR) is disordered. Residues 1 to 57 (MAQENAAFSPGSEEPPRRRGRQRYVEKDGRCNVQQGNVRETYRYLTDLFTTLVDLQW) lie on the Cytoplasmic side of the membrane. The helical transmembrane segment at 58–82 (RLSLLFFVLAYALTWLFFGAIWWLI) threads the bilayer. Topologically, residues 83–106 (AYGRGDLEHLEDTAWTPCVNNLNG) are extracellular. The helical; Pore-forming intramembrane region spans 107-118 (FVAAFLFSIETE). An intramembrane region (pore-forming) is located at residues 119–125 (TTIGYGH). The Selectivity filter motif lies at 120–125 (TIGYGH). Over 126-134 (RVITDQCPE) the chain is Extracellular. The chain crosses the membrane as a helical span at residues 135 to 156 (GIVLLLLQAILGSMVNAFMVGC). Topologically, residues 157 to 393 (MFVKISQPNK…LPPPESESKV (237 aa)) are cytoplasmic. Positions 360–393 (KVEEEGAGEGAGAGDGADKEHNGCLPPPESESKV) are disordered. Positions 384–393 (LPPPESESKV) are enriched in pro residues. A PDZ-binding motif is present at residues 390–393 (ESKV).

This sequence belongs to the inward rectifier-type potassium channel (TC 1.A.2.1) family. KCNJ9 subfamily. Associates with KCNJ3/GIRK1 to form a G-protein-activated heteromultimer pore-forming unit. Interacts (via PDZ-binding motif) with SNX27 (via PDZ domain); the interaction is required when endocytosed to prevent degradation in lysosomes and promote recycling to the plasma membrane. Expressed mainly in the brain, some expression in the skeletal muscle.

The protein resides in the membrane. It carries out the reaction K(+)(in) = K(+)(out). Functionally, inward rectifier potassium channels are characterized by a greater tendency to allow potassium to flow into the cell rather than out of it. Their voltage dependence is regulated by the concentration of extracellular potassium; as external potassium is raised, the voltage range of the channel opening shifts to more positive voltages. The inward rectification is mainly due to the blockage of outward current by internal magnesium. This receptor is controlled by G proteins. Unable to produce channel activity when expressed alone. Forms a functional channel in association with KCNJ3/GIRK1. This Mus musculus (Mouse) protein is G protein-activated inward rectifier potassium channel 3 (Kcnj9).